A 379-amino-acid chain; its full sequence is Putative FBD-associated F-box protein At5g38570 (379 aa).

In terms of domain architecture, F-box spans 1–47; sequence MDNINGLPDDLLVKILSFVPTYVAVSTCVLSKRWEFLWMWLPNLEFV. The FBD domain occupies 295 to 345; that stretch reads CWNQPSSVLECLLSSLKILNWSAYFGRPQDRDIAVYILKNACHLKTATFLT.

This Arabidopsis thaliana (Mouse-ear cress) protein is Putative FBD-associated F-box protein At5g38570.